The primary structure comprises 374 residues: DNA replication and repair protein RecF (374 aa).

An ATP-binding site is contributed by 30–37 (GENAQGKT).

It belongs to the RecF family.

The protein resides in the cytoplasm. Its function is as follows. The RecF protein is involved in DNA metabolism; it is required for DNA replication and normal SOS inducibility. RecF binds preferentially to single-stranded, linear DNA. It also seems to bind ATP. This chain is DNA replication and repair protein RecF, found in Geobacillus sp. (strain WCH70).